We begin with the raw amino-acid sequence, 309 residues long: uncharacterized protein (309 aa).

The HTH lysR-type domain maps to 1–60 (MKPLLDVLMILDALEKEGSFAAASAKLYKTPSALSYTVHKLESDLNIQLLDRSGHRAKFT). The segment at residues 20-39 (FAAASAKLYKTPSALSYTVH) is a DNA-binding region (H-T-H motif).

Belongs to the LysR transcriptional regulatory family.

This is an uncharacterized protein from Escherichia coli (strain K12).